Reading from the N-terminus, the 180-residue chain is ATP-dependent protease subunit HslV (180 aa).

Residue Thr8 is part of the active site. Positions 165, 168, and 171 each coordinate Na(+).

It belongs to the peptidase T1B family. HslV subfamily. A double ring-shaped homohexamer of HslV is capped on each side by a ring-shaped HslU homohexamer. The assembly of the HslU/HslV complex is dependent on binding of ATP.

The protein resides in the cytoplasm. The catalysed reaction is ATP-dependent cleavage of peptide bonds with broad specificity.. Its activity is regulated as follows. Allosterically activated by HslU binding. In terms of biological role, protease subunit of a proteasome-like degradation complex believed to be a general protein degrading machinery. This Staphylococcus saprophyticus subsp. saprophyticus (strain ATCC 15305 / DSM 20229 / NCIMB 8711 / NCTC 7292 / S-41) protein is ATP-dependent protease subunit HslV.